The chain runs to 988 residues: Protein SEMI-ROLLED LEAF 2 (988 aa).

Residues 844 to 865 are disordered; it reads SVDGGLHESPITNTGSSISKTT. Residues 853 to 865 are compositionally biased toward polar residues; the sequence is PITNTGSSISKTT.

As to expression, expressed in root tips, and in the vascular bundles of leaf blades, leaf sheaths, and roots, especially in their sclerenchymatous cells.

It localises to the nucleus. Its subcellular location is the cytoplasm. Functions in regulating leaf rolling through abaxial side leaf cell differentiation. May be involved in the transdifferentiation process from mesophyll cells to sclerenchymatous cells. The chain is Protein SEMI-ROLLED LEAF 2 from Oryza sativa subsp. japonica (Rice).